The chain runs to 93 residues: Pancreatic polypeptide prohormone (93 aa).

Positions 1 to 29 (MPAACRCLFLLLLSACVALLLQPPLGTRG) are cleaved as a signal peptide. At Tyr65 the chain carries Tyrosine amide. Positions 89–93 (ELMDE) are excised as a propeptide.

This sequence belongs to the NPY family.

The protein resides in the secreted. Functionally, hormone secreted by pancreatic cells that acts as a regulator of pancreatic and gastrointestinal functions probably by signaling through the G protein-coupled receptor NPY4R2. In Canis lupus familiaris (Dog), this protein is Pancreatic polypeptide prohormone (PPY).